An 87-amino-acid polypeptide reads, in one-letter code: Large ribosomal subunit protein eL34 (87 aa).

Belongs to the eukaryotic ribosomal protein eL34 family.

This is Large ribosomal subunit protein eL34 from Sulfurisphaera tokodaii (strain DSM 16993 / JCM 10545 / NBRC 100140 / 7) (Sulfolobus tokodaii).